Here is a 95-residue protein sequence, read N- to C-terminus: Cell division protein FtsB (95 aa).

The Cytoplasmic portion of the chain corresponds to 1–3 (MKW). The chain crosses the membrane as a helical span at residues 4-21 (VTGLLVVLLLGLQYKLWI). The Periplasmic segment spans residues 22–95 (GEGSVAEVWQ…QVVGRPGETP (74 aa)). The stretch at 26 to 73 (VAEVWQLRQTLEAQRAENEELRYRNAALDAEVTDLKTGLDAIEERARR) forms a coiled coil.

It belongs to the FtsB family. As to quaternary structure, part of a complex composed of FtsB, FtsL and FtsQ.

The protein localises to the cell inner membrane. Its function is as follows. Essential cell division protein. May link together the upstream cell division proteins, which are predominantly cytoplasmic, with the downstream cell division proteins, which are predominantly periplasmic. The protein is Cell division protein FtsB of Thioalkalivibrio sulfidiphilus (strain HL-EbGR7).